The chain runs to 280 residues: UPF0750 membrane protein YitT (280 aa).

The next 4 helical transmembrane spans lie at 9 to 29, 54 to 74, 80 to 100, and 151 to 171; these read LLIVIIGALLNAAGLNLFLIP, FYISTGTLLFLLNIPVGILGW, SFTVYSILSVALTTLFMGILP, and VGTYFFILNGIIILTAGLLQG.

Belongs to the UPF0750 family.

It is found in the cell membrane. This is UPF0750 membrane protein YitT (yitT) from Bacillus subtilis (strain 168).